The primary structure comprises 411 residues: Protein BTN1 (411 aa).

A signal peptide spans 1–29; that stretch reads MNSKQRVYAFFWIFGLVNNVLYVVILSAA. A run of 8 helical transmembrane segments spans residues 41-61, 79-99, 127-147, 149-169, 281-300, 307-329, 334-356, and 371-391; these read LVLLMDITPSLLIKVTAPFFI, IGMIFVSGKSLLLCMIGIAMA, SGTGGAGIVGSSVYMLLTSIF, LPIRLSLLSFTILPFAFLLYF, YVTYGTLYQLGVFISRSLAH, LYFLSALQGLNLVLTILQAWIYI, WPIMILIFYEGLLGGSSYVNTFL, and LGAVSIADSLGVFIAALVGLG.

This sequence belongs to the battenin family.

Its subcellular location is the vacuole membrane. Its function is as follows. Involved in vacuolar transport and vacuole pH homeostasis. Also required for cytokinesis. In Candida glabrata (strain ATCC 2001 / BCRC 20586 / JCM 3761 / NBRC 0622 / NRRL Y-65 / CBS 138) (Yeast), this protein is Protein BTN1 (BTN1).